Here is a 340-residue protein sequence, read N- to C-terminus: MSELDQLRQEAEQLKSQIREARKSANDTTLATVASNLEPIGRIQMRTRRTLRGHLAKIYAMHWASDSRNLVSASQDGKLIVWDSYTTNKVHAIPLRSSWVMTCAYAPSGSFVACGGLDNICSIYSLKTREGNVRVSRELPGHTGYLSCCRFLDDNQIVTSSGDMTCALWDIETGQQCTAFTGHTGDVMSLSLSPDFRTFISGACDASAKLWDIRDGMCKQTFPGHESDINAVAFFPSGNAFATGSDDATCRLFDIRADQELAMYSHDNIICGITSVAFSKSGRLLFAGYDDFNCNVWDSMRQERAGVLAGHDNRVSCLGVTEDGMAVCTGSWDSFLKIWN.

7 WD repeats span residues 53–83 (GHLA…IVWD), 95–125 (LRSS…SIYS), 141–170 (GHTG…ALWD), 182–212 (GHTG…KLWD), 224–254 (GHES…RLFD), 268–298 (NIIC…NVWD), and 310–340 (GHDN…KIWN).

This sequence belongs to the WD repeat G protein beta family. G proteins are composed of 3 units, alpha, beta and gamma. Interacts with G protein gamma subunits gpc-1 and gpc-2 and with egl-10 and eat-16. Interacts with goa-1 (in GDP-bound form).

Guanine nucleotide-binding proteins (G proteins) are involved as a modulator or transducer in various transmembrane signaling systems. The beta and gamma chains are required for the GTPase activity, for replacement of GDP by GTP, and for G protein-effector interaction. In the early embryo, controls the magnitude of the forces acting on centrosomes but is not required for generating asymmetric forces. The sequence is that of Guanine nucleotide-binding protein subunit beta-1 (gpb-1) from Caenorhabditis briggsae.